Reading from the N-terminus, the 459-residue chain is Mitochondrial distribution and morphology protein 10 (459 aa).

It belongs to the MDM10 family. Component of the ER-mitochondria encounter structure (ERMES) or MDM complex, composed of MMM1, MDM10, MDM12 and MDM34. Associates with the mitochondrial outer membrane sorting assembly machinery SAM(core) complex.

It localises to the mitochondrion outer membrane. Component of the ERMES/MDM complex, which serves as a molecular tether to connect the endoplasmic reticulum and mitochondria. Components of this complex are involved in the control of mitochondrial shape and protein biogenesis and may function in phospholipid exchange. MDM10 is involved in the late assembly steps of the general translocase of the mitochondrial outer membrane (TOM complex). Functions in the TOM40-specific route of the assembly of outer membrane beta-barrel proteins, including the association of TOM40 with the receptor TOM22 and small TOM proteins. Can associate with the SAM(core) complex as well as the MDM12-MMM1 complex, both involved in late steps of the major beta-barrel assembly pathway, that is responsible for biogenesis of all outer membrane beta-barrel proteins. May act as a switch that shuttles between both complexes and channels precursor proteins into the TOM40-specific pathway. Plays a role in mitochondrial morphology and in the inheritance of mitochondria. In Clavispora lusitaniae (strain ATCC 42720) (Yeast), this protein is Mitochondrial distribution and morphology protein 10.